A 357-amino-acid polypeptide reads, in one-letter code: DNA replication and repair protein RecF (357 aa).

30 to 37 is an ATP binding site; the sequence is GANGSGKT.

It belongs to the RecF family.

It localises to the cytoplasm. The RecF protein is involved in DNA metabolism; it is required for DNA replication and normal SOS inducibility. RecF binds preferentially to single-stranded, linear DNA. It also seems to bind ATP. The protein is DNA replication and repair protein RecF of Salmonella agona (strain SL483).